The following is a 203-amino-acid chain: NAD(P)H dehydrogenase (quinone) (203 aa).

The Flavodoxin-like domain occupies 3–194 (VLIAYYSMYG…AAARYQGKHV (192 aa)). Residues 9–14 (SMYGHI) and 82–84 (TRF) each bind FMN. Tyr-11 provides a ligand contact to NAD(+). Trp-102 is a binding site for substrate. FMN is bound by residues 117–123 (SSATQHG) and His-138.

This sequence belongs to the WrbA family. FMN serves as cofactor.

It catalyses the reaction a quinone + NADH + H(+) = a quinol + NAD(+). The enzyme catalyses a quinone + NADPH + H(+) = a quinol + NADP(+). This Geotalea uraniireducens (strain Rf4) (Geobacter uraniireducens) protein is NAD(P)H dehydrogenase (quinone).